Consider the following 334-residue polypeptide: Tryptophan--tRNA ligase (334 aa).

ATP is bound by residues 11–13 (QPS) and 19–20 (GN). A 'HIGH' region motif is present at residues 12–20 (PSGELTIGN). Position 135 (Asp135) interacts with L-tryptophan. ATP contacts are provided by residues 147 to 149 (GED), Val186, and 195 to 199 (KMSKS). The short motif at 195 to 199 (KMSKS) is the 'KMSKS' region element.

It belongs to the class-I aminoacyl-tRNA synthetase family. Homodimer.

Its subcellular location is the cytoplasm. The catalysed reaction is tRNA(Trp) + L-tryptophan + ATP = L-tryptophyl-tRNA(Trp) + AMP + diphosphate + H(+). Catalyzes the attachment of tryptophan to tRNA(Trp). Amino acylates tRNA(Trp) with both L- and D-tryptophan, although D-tryptophan is a poor substrate. The protein is Tryptophan--tRNA ligase of Escherichia coli (strain K12).